We begin with the raw amino-acid sequence, 937 residues long: Protein SEY1 homolog (937 aa).

At Met-1 to Asn-848 the chain is on the cytoplasmic side. A GB1/RHD3-type G domain is found at Gly-34–Cys-280. Position 44 to 51 (Gly-44 to Ser-51) interacts with GTP. 2 coiled-coil regions span residues Asn-319–Glu-339 and Tyr-725–Gln-750. Residues Val-849–Ile-869 traverse the membrane as a helical segment. At Arg-870–Phe-872 the chain is on the lumenal side. The helical transmembrane segment at Phe-873 to Val-893 threads the bilayer. Residues Tyr-894–Glu-937 lie on the Cytoplasmic side of the membrane.

It belongs to the TRAFAC class dynamin-like GTPase superfamily. GB1/RHD3 GTPase family. RHD3 subfamily.

It localises to the endoplasmic reticulum membrane. Its function is as follows. Probable GTP-binding protein involved in generating and maintaining the structure of the tubular endoplasmic reticulum network. The protein is Protein SEY1 homolog of Plasmodium falciparum (isolate 3D7).